The following is a 249-amino-acid chain: tRNA (guanine-N(1)-)-methyltransferase (249 aa).

Residues Gly-113 and 133–138 contribute to the S-adenosyl-L-methionine site; that span reads IGDFVV.

This sequence belongs to the RNA methyltransferase TrmD family. In terms of assembly, homodimer.

The protein resides in the cytoplasm. The enzyme catalyses guanosine(37) in tRNA + S-adenosyl-L-methionine = N(1)-methylguanosine(37) in tRNA + S-adenosyl-L-homocysteine + H(+). Specifically methylates guanosine-37 in various tRNAs. This Neisseria meningitidis serogroup C (strain 053442) protein is tRNA (guanine-N(1)-)-methyltransferase.